Consider the following 514-residue polypeptide: 2,3-bisphosphoglycerate-independent phosphoglycerate mutase (514 aa).

Mn(2+) is bound by residues D13 and S63. S63 (phosphoserine intermediate) is an active-site residue. Residues H124, 154–155, R186, R192, 258–261, and K332 contribute to the substrate site; these read RD and RADR. Mn(2+)-binding residues include D399, H403, D440, H441, and H459.

Belongs to the BPG-independent phosphoglycerate mutase family. In terms of assembly, monomer. Requires Mn(2+) as cofactor.

The enzyme catalyses (2R)-2-phosphoglycerate = (2R)-3-phosphoglycerate. The protein operates within carbohydrate degradation; glycolysis; pyruvate from D-glyceraldehyde 3-phosphate: step 3/5. Functionally, catalyzes the interconversion of 2-phosphoglycerate and 3-phosphoglycerate. This Legionella pneumophila (strain Corby) protein is 2,3-bisphosphoglycerate-independent phosphoglycerate mutase.